The sequence spans 676 residues: UvrABC system protein C (676 aa).

Positions 16-95 constitute a GIY-YIG domain; sequence VEPGVYRFRD…IKEFDPRFNI (80 aa). In terms of domain architecture, UVR spans 208–243; it reads DRLVRDLERKMTAAAEDLDFERAARLRDDIGALRRA.

Belongs to the UvrC family. As to quaternary structure, interacts with UvrB in an incision complex.

It is found in the cytoplasm. In terms of biological role, the UvrABC repair system catalyzes the recognition and processing of DNA lesions. UvrC both incises the 5' and 3' sides of the lesion. The N-terminal half is responsible for the 3' incision and the C-terminal half is responsible for the 5' incision. This chain is UvrABC system protein C, found in Mycobacterium sp. (strain KMS).